Here is a 367-residue protein sequence, read N- to C-terminus: Serine/threonine-protein kinase Sgk2 (367 aa).

Positions 1-26 are disordered; that stretch reads MNSSPAGTPSPQPSRANGNINLGPSA. The residue at position 10 (serine 10) is a Phosphoserine. Residues 35–292 form the Protein kinase domain; it reads FDFLKVIGKG…FLEIKNHVFF (258 aa). Residues 41–49 and lysine 64 contribute to the ATP site; that span reads IGKGNYGKV. The short motif at 68–78 is the Nuclear localization signal element; the sequence is KKSILKKKEQS. Aspartate 159 (proton acceptor) is an active-site residue. Threonine 193 is subject to Phosphothreonine; by PDPK1. Residues 293 to 367 enclose the AGC-kinase C-terminal domain; sequence SPINWDDLYH…APEDDDILDC (75 aa). Residues serine 334 and serine 356 each carry the phosphoserine modification. Tyrosine 357 carries the post-translational modification Phosphotyrosine.

This sequence belongs to the protein kinase superfamily. AGC Ser/Thr protein kinase family. Activated by phosphorylation on Ser-356 by an unknown kinase (may be mTORC2 but not confirmed), transforming it into a substrate for PDPK1 which then phosphorylates it on Thr-193. In terms of tissue distribution, highly expressed in liver, kidney and pancreas, and at lower levels in brain.

Its subcellular location is the cytoplasm. The protein resides in the nucleus. It carries out the reaction L-seryl-[protein] + ATP = O-phospho-L-seryl-[protein] + ADP + H(+). It catalyses the reaction L-threonyl-[protein] + ATP = O-phospho-L-threonyl-[protein] + ADP + H(+). With respect to regulation, two specific sites, one in the kinase domain (Thr-193) and the other in the C-terminal regulatory region (Ser-356), need to be phosphorylated for its full activation. Its function is as follows. Serine/threonine-protein kinase which is involved in the regulation of a wide variety of ion channels, membrane transporters, cell growth, survival and proliferation. Up-regulates Na(+) channels: SCNN1A/ENAC, K(+) channels: KCNA3/Kv1.3, KCNE1 and KCNQ1, amino acid transporter: SLC6A19, glutamate transporter: SLC1A6/EAAT4, glutamate receptors: GRIA1/GLUR1 and GRIK2/GLUR6, Na(+)/H(+) exchanger: SLC9A3/NHE3, and the Na(+)/K(+) ATPase. This is Serine/threonine-protein kinase Sgk2 (SGK2) from Homo sapiens (Human).